The chain runs to 347 residues: Sulfate/thiosulfate import ATP-binding protein CysA 1 (347 aa).

The ABC transporter domain maps to valine 3 to isoleucine 237. Residue glycine 35–threonine 42 participates in ATP binding.

This sequence belongs to the ABC transporter superfamily. Sulfate/tungstate importer (TC 3.A.1.6) family. The complex is composed of two ATP-binding proteins (CysA), two transmembrane proteins (CysT and CysW) and a solute-binding protein (CysP).

It is found in the cell inner membrane. The catalysed reaction is sulfate(out) + ATP + H2O = sulfate(in) + ADP + phosphate + H(+). It carries out the reaction thiosulfate(out) + ATP + H2O = thiosulfate(in) + ADP + phosphate + H(+). Its function is as follows. Part of the ABC transporter complex CysAWTP involved in sulfate/thiosulfate import. Responsible for energy coupling to the transport system. This is Sulfate/thiosulfate import ATP-binding protein CysA 1 from Rhizobium meliloti (strain 1021) (Ensifer meliloti).